Consider the following 91-residue polypeptide: uncharacterized protein (91 aa).

3 consecutive transmembrane segments (helical) span residues 9 to 29 (VLWG…PFLP), 44 to 64 (LTVN…VFAW), and 71 to 91 (QFVF…CLAL).

The protein resides in the cell membrane. This is an uncharacterized protein from Bacillus subtilis (strain 168).